A 276-amino-acid chain; its full sequence is NH(3)-dependent NAD(+) synthetase (276 aa).

43–50 is an ATP binding site; the sequence is GISGGVDS. D49 lines the Mg(2+) pocket. R146 contributes to the deamido-NAD(+) binding site. T166 is an ATP binding site. E171 contributes to the Mg(2+) binding site. Deamido-NAD(+) contacts are provided by K179 and D186. Residues K195 and T217 each contribute to the ATP site. 266 to 267 serves as a coordination point for deamido-NAD(+); that stretch reads HK.

It belongs to the NAD synthetase family. In terms of assembly, homodimer.

It catalyses the reaction deamido-NAD(+) + NH4(+) + ATP = AMP + diphosphate + NAD(+) + H(+). The protein operates within cofactor biosynthesis; NAD(+) biosynthesis; NAD(+) from deamido-NAD(+) (ammonia route): step 1/1. Catalyzes the ATP-dependent amidation of deamido-NAD to form NAD. Uses ammonia as a nitrogen source. The chain is NH(3)-dependent NAD(+) synthetase from Shewanella pealeana (strain ATCC 700345 / ANG-SQ1).